Consider the following 117-residue polypeptide: MTEPQFRSKGPELLVELSQHVADTVKTVTELDPQTAELVGNARFAKHMMTVWGGQNVYFPMGISWRASQRDLQIYEEFDGRNHSALAKKYNVSLQWIYKIVRTMRKEELLAKQHTQA.

The segment at residues 82-102 (NHSALAKKYNVSLQWIYKIVR) is a DNA-binding region (H-T-H motif).

This sequence belongs to the c/mor transcriptional regulatory family.

In terms of biological role, regulates pectin lyase production in response to DNA damage. This chain is DNA-binding protein RdgB (rdgB), found in Pectobacterium carotovorum subsp. carotovorum (Erwinia carotovora subsp. carotovora).